The sequence spans 146 residues: Snaclec echicetin subunit beta (146 aa).

Residues 1–23 form the signal peptide; it reads MGRFISVSFGLLVLLLSLSGTGA. 3 cysteine pairs are disulfide-bonded: Cys25-Cys36, Cys53-Cys142, and Cys119-Cys134. The region spanning 32-143 is the C-type lectin domain; it reads YEGYCYKVFK…CTWTFSFVCK (112 aa).

This sequence belongs to the snaclec family. Heterodimer of subunits alpha and beta; disulfide-linked. As to expression, expressed by the venom gland.

The protein resides in the secreted. Binding of echicetin to glycoprotein Ibalpha (GP1BA) receptor on platelets alone results in inhibition of platelet aggregation, while binding to both GPIba receptor and IgMk promotes platelet aggregation and signal transduction. In Echis carinatus (Saw-scaled viper), this protein is Snaclec echicetin subunit beta.